Consider the following 811-residue polypeptide: Glycerol-3-phosphate acyltransferase (811 aa).

An HXXXXD motif motif is present at residues 303 to 308 (HRSHMD).

The protein belongs to the GPAT/DAPAT family.

The protein resides in the cell inner membrane. It carries out the reaction sn-glycerol 3-phosphate + an acyl-CoA = a 1-acyl-sn-glycero-3-phosphate + CoA. It functions in the pathway phospholipid metabolism; CDP-diacylglycerol biosynthesis; CDP-diacylglycerol from sn-glycerol 3-phosphate: step 1/3. This chain is Glycerol-3-phosphate acyltransferase, found in Haemophilus ducreyi (strain 35000HP / ATCC 700724).